The primary structure comprises 408 residues: GTPase Obg (408 aa).

Positions 1 to 159 (MKFFDEARIE…RNLHLELKVL (159 aa)) constitute an Obg domain. The OBG-type G domain occupies 160–334 (ADVGLLGMPN…LIFALQDFLD (175 aa)). GTP contacts are provided by residues 166-173 (GMPNAGKS), 191-195 (FTTLQ), 213-216 (DIPG), 284-287 (NKLD), and 315-317 (SAL). 2 residues coordinate Mg(2+): Ser173 and Thr193. Positions 385–408 (AEDALAEDALDDDADGEDADPNAR) are disordered.

This sequence belongs to the TRAFAC class OBG-HflX-like GTPase superfamily. OBG GTPase family. As to quaternary structure, monomer. Mg(2+) is required as a cofactor.

The protein resides in the cytoplasm. An essential GTPase which binds GTP, GDP and possibly (p)ppGpp with moderate affinity, with high nucleotide exchange rates and a fairly low GTP hydrolysis rate. Plays a role in control of the cell cycle, stress response, ribosome biogenesis and in those bacteria that undergo differentiation, in morphogenesis control. This Azoarcus sp. (strain BH72) protein is GTPase Obg.